Here is a 153-residue protein sequence, read N- to C-terminus: Cystatin-9 (153 aa).

The N-terminal stretch at 1–27 (MGRQRRCRWAQPWTLLLLLLGPRLLVT) is a signal peptide.

The protein belongs to the cystatin family.

It localises to the secreted. Functionally, may play a role in hematopoietic differentiation or inflammation. This is Cystatin-9 (CST9) from Bos taurus (Bovine).